Consider the following 107-residue polypeptide: U1-lycotoxin-Ls1x (107 aa).

The N-terminal stretch at 1-20 (MMKVLVVVALLVTLISYSSS) is a signal peptide. Residues 21–41 (EGIDDLEADELLSLMANEHPR) constitute a propeptide that is removed on maturation. Intrachain disulfides connect Cys-44–Cys-59, Cys-51–Cys-68, Cys-58–Cys-86, and Cys-70–Cys-84.

Belongs to the neurotoxin 19 (CSTX) family. 04 (U1-Lctx) subfamily. Expressed by the venom gland.

Its subcellular location is the secreted. This Lycosa singoriensis (Wolf spider) protein is U1-lycotoxin-Ls1x.